We begin with the raw amino-acid sequence, 715 residues long: Polyribonucleotide nucleotidyltransferase (715 aa).

Residues D500 and D506 each coordinate Mg(2+). Positions 567 to 634 (PKVKMIRINP…AYIESLVREA (68 aa)) constitute a KH domain. An S1 motif domain is found at 637 to 712 (GELYEAKVTR…ERGRVDLSRK (76 aa)).

It belongs to the polyribonucleotide nucleotidyltransferase family. Mg(2+) serves as cofactor.

The protein localises to the cytoplasm. It catalyses the reaction RNA(n+1) + phosphate = RNA(n) + a ribonucleoside 5'-diphosphate. Functionally, involved in mRNA degradation. Catalyzes the phosphorolysis of single-stranded polyribonucleotides processively in the 3'- to 5'-direction. This is Polyribonucleotide nucleotidyltransferase from Acholeplasma laidlawii (strain PG-8A).